A 231-amino-acid polypeptide reads, in one-letter code: Endonuclease NucS (231 aa).

The protein belongs to the NucS endonuclease family.

Its subcellular location is the cytoplasm. Its function is as follows. Cleaves both 3' and 5' ssDNA extremities of branched DNA structures. This is Endonuclease NucS from Kocuria rhizophila (strain ATCC 9341 / DSM 348 / NBRC 103217 / DC2201).